Consider the following 583-residue polypeptide: Aspartate--tRNA ligase (583 aa).

E169 contributes to the L-aspartate binding site. The aspartate stretch occupies residues 193 to 196; it reads QLFK. Position 215 (R215) interacts with L-aspartate. ATP contacts are provided by residues 215 to 217 and Q224; that span reads RDE. H443 contributes to the L-aspartate binding site. Position 477 (E477) interacts with ATP. R484 is an L-aspartate binding site. Residue 529 to 532 coordinates ATP; sequence GIDR.

The protein belongs to the class-II aminoacyl-tRNA synthetase family. Type 1 subfamily. As to quaternary structure, homodimer.

It is found in the cytoplasm. It catalyses the reaction tRNA(Asp) + L-aspartate + ATP = L-aspartyl-tRNA(Asp) + AMP + diphosphate. Functionally, catalyzes the attachment of L-aspartate to tRNA(Asp) in a two-step reaction: L-aspartate is first activated by ATP to form Asp-AMP and then transferred to the acceptor end of tRNA(Asp). The chain is Aspartate--tRNA ligase from Stenotrophomonas maltophilia (strain K279a).